A 242-amino-acid polypeptide reads, in one-letter code: Uridylate kinase (242 aa).

Position 11–14 (11–14) interacts with ATP; sequence KLSG. The interval 19-24 is involved in allosteric activation by GTP; the sequence is GNMGYG. G53 lines the UMP pocket. Residues G54 and R58 each coordinate ATP. UMP contacts are provided by residues D73 and 134 to 141; that span reads SGNPFFTT. ATP is bound by residues T161, Y167, and D170.

It belongs to the UMP kinase family. In terms of assembly, homohexamer.

It localises to the cytoplasm. It catalyses the reaction UMP + ATP = UDP + ADP. The protein operates within pyrimidine metabolism; CTP biosynthesis via de novo pathway; UDP from UMP (UMPK route): step 1/1. Its activity is regulated as follows. Allosterically activated by GTP. Inhibited by UTP. In terms of biological role, catalyzes the reversible phosphorylation of UMP to UDP. The protein is Uridylate kinase of Nostoc sp. (strain PCC 7120 / SAG 25.82 / UTEX 2576).